The following is a 78-amino-acid chain: RTX-VII (78 aa).

The first 22 residues, 1–22 (MKTIVYLIVSILLLSSTVLVLA), serve as a signal peptide directing secretion. A propeptide spanning residues 23 to 40 (EGNAASHELQEYPIEEQR) is cleaved from the precursor. 4 disulfide bridges follow: Cys42/Cys58, Cys47/Cys63, Cys57/Cys73, and Cys65/Cys71. Arg76 is subject to Arginine amide.

Expressed by the venom gland.

It is found in the secreted. Agonist of rat Nav1.3/SCN3A. This toxin increases the peak current amplitude, and potently inhibits the fast inactivation of the channel (EC(50)=120 nM). The inhibition of fast inactivation is voltage-independent (depolarizing voltages ranging from 220 mV to 130 mV). The toxin might bind to the domain IV of the Nav1.3 channel, while domain II might not participate in interacting with the toxin but could determine the efficacy of RTX-VII. In vivo, when intracerebroventricularly injected into mice, the toxin causes involuntary body twitching (seizure-like symptoms). This is RTX-VII from Macrothele raveni (Funnel-web spider).